Consider the following 282-residue polypeptide: MIYETAPAKINFTLDTLFKRNDGYHEIEMIMTTVDLNDRLTFHKRKDRKIVVEIEHNYVPSNHKNLAYRAAQLFIEQYQLKQGVTISIDKEIPVSAGLAGGSADAAATLRGLNRLFNIGASLEELALLGSKIGTDIPFCIYNKTALCTGKGEKIEFLNKPPSAWVILAKPNLGISSPDIFKLINLDKRYDVHTKMCYEALENRDYQQLCQSLSNRLEPISVSKHPQIDKLKNNMLKSGADGALMSGSGPTVYGLAQKESQAKNIYNAVNGCCNEVYLVRLLG.

Residue lysine 9 is part of the active site. ATP is bound at residue 93–103 (PVSAGLAGGSA). Aspartate 135 is a catalytic residue.

Belongs to the GHMP kinase family. IspE subfamily.

It carries out the reaction 4-CDP-2-C-methyl-D-erythritol + ATP = 4-CDP-2-C-methyl-D-erythritol 2-phosphate + ADP + H(+). Its function is as follows. Catalyzes the phosphorylation of the position 2 hydroxy group of 4-diphosphocytidyl-2C-methyl-D-erythritol. This chain is Putative 4-diphosphocytidyl-2-C-methyl-D-erythritol kinase, found in Staphylococcus aureus (strain MRSA252).